A 22-amino-acid polypeptide reads, in one-letter code: uncharacterized protein (22 aa).

The interval 1-22 is disordered; sequence MHNSIAYDKDGNSTGQKYYAYG.

This is an uncharacterized protein from Lactobacillus helveticus (Lactobacillus suntoryeus).